The primary structure comprises 307 residues: Oxygen-dependent coproporphyrinogen-III oxidase (307 aa).

Ser-97 contributes to the substrate binding site. 2 residues coordinate a divalent metal cation: His-101 and His-111. His-111 acts as the Proton donor in catalysis. Substrate is bound at residue 113–115 (NVR). A divalent metal cation-binding residues include His-152 and His-182. Positions 247–282 (YVEFNLVWDRGTHFGLQSGGRTESILMSMPPLASWS) are important for dimerization. 265-267 (GGR) is a binding site for substrate.

The protein belongs to the aerobic coproporphyrinogen-III oxidase family. In terms of assembly, homodimer. A divalent metal cation is required as a cofactor.

The protein resides in the cytoplasm. The catalysed reaction is coproporphyrinogen III + O2 + 2 H(+) = protoporphyrinogen IX + 2 CO2 + 2 H2O. It participates in porphyrin-containing compound metabolism; protoporphyrin-IX biosynthesis; protoporphyrinogen-IX from coproporphyrinogen-III (O2 route): step 1/1. Functionally, involved in the heme biosynthesis. Catalyzes the aerobic oxidative decarboxylation of propionate groups of rings A and B of coproporphyrinogen-III to yield the vinyl groups in protoporphyrinogen-IX. The protein is Oxygen-dependent coproporphyrinogen-III oxidase of Polaromonas naphthalenivorans (strain CJ2).